We begin with the raw amino-acid sequence, 225 residues long: UPF0758 protein XOO0462 (225 aa).

The MPN domain occupies 102-224 (ALSDPPSVGR…PVSLAERGWL (123 aa)). Zn(2+) contacts are provided by His173, His175, and Asp186. Positions 173–186 (HNHPSGNPEPSEAD) match the JAMM motif motif.

The protein belongs to the UPF0758 family.

The sequence is that of UPF0758 protein XOO0462 from Xanthomonas oryzae pv. oryzae (strain MAFF 311018).